The primary structure comprises 232 residues: MQKNAAHTYAISSLLVLSLTGCAWIPSTPLVQGATSAQPVPGPAPVANGSIFQSAQPINYGYQPLFEDRRPRNIGDTLTIVLQENVSASKSSSANASRDGKTNFGFDTVPRYLQGLFGNARADVEASGGNTFNGKGGANASNTFSGTLTVTVDQVLVNGNLHVVGEKQIAINQGTEFIRFSGVVNPRTISGSNTVPSTQVADARIEYVGNGYINEAQNMGWLQRFFLNLSPM.

The N-terminal stretch at 1 to 21 (MQKNAAHTYAISSLLVLSLTG) is a signal peptide. Cys-22 carries N-palmitoyl cysteine lipidation. Residue Cys-22 is the site of S-diacylglycerol cysteine attachment.

Belongs to the FlgH family. The basal body constitutes a major portion of the flagellar organelle and consists of four rings (L,P,S, and M) mounted on a central rod.

The protein localises to the cell outer membrane. It is found in the bacterial flagellum basal body. Assembles around the rod to form the L-ring and probably protects the motor/basal body from shearing forces during rotation. This chain is Flagellar L-ring protein, found in Escherichia coli O7:K1 (strain IAI39 / ExPEC).